Here is a 743-residue protein sequence, read N- to C-terminus: Threonine synthase-like 1 (743 aa).

Position 281 is an N6-acetyllysine (Lys-281). Lys-351 is modified (N6-(pyridoxal phosphate)lysine).

It belongs to the threonine synthase family. Pyridoxal 5'-phosphate is required as a cofactor.

This chain is Threonine synthase-like 1 (THNSL1), found in Macaca fascicularis (Crab-eating macaque).